A 347-amino-acid chain; its full sequence is UDP-N-acetylenolpyruvoylglucosamine reductase (347 aa).

An FAD-binding PCMH-type domain is found at 16–187 (AIEQCSHYLV…IAVGLKLPKT (172 aa)). The active site involves arginine 163. Catalysis depends on serine 233, which acts as the Proton donor. Residue glutamate 328 is part of the active site.

It belongs to the MurB family. FAD is required as a cofactor.

It localises to the cytoplasm. The catalysed reaction is UDP-N-acetyl-alpha-D-muramate + NADP(+) = UDP-N-acetyl-3-O-(1-carboxyvinyl)-alpha-D-glucosamine + NADPH + H(+). Its pathway is cell wall biogenesis; peptidoglycan biosynthesis. Functionally, cell wall formation. In Vibrio vulnificus (strain CMCP6), this protein is UDP-N-acetylenolpyruvoylglucosamine reductase.